The primary structure comprises 490 residues: Actin-related protein 6 (490 aa).

It belongs to the actin family. ARP6 subfamily.

It localises to the cytoplasm. The protein localises to the cytoskeleton. The chain is Actin-related protein 6 from Dictyostelium discoideum (Social amoeba).